Here is a 1007-residue protein sequence, read N- to C-terminus: Tolloid-like protein 1 (1007 aa).

An N-terminal signal peptide occupies residues 1–25 (MNMPSWLIFLLTGWTFCGNFFACGG). Residues 26–142 (LDYDYPNYEN…GKSKKIRIPR (117 aa)) constitute a propeptide that is removed on maturation. The segment at 115-139 (SGQENTTANSQKVDNNQSGKSKKIR) is disordered. Polar residues predominate over residues 116 to 133 (GQENTTANSQKVDNNQSG). Positions 143–342 (AATSRTERIW…AQARKLYRCP (200 aa)) constitute a Peptidase M12A domain. An N-linked (GlcNAc...) asparagine glycan is attached at N164. Cystine bridges form between C185–C341, C205–C227, C207–C208, and C344–C370. H235 provides a ligand contact to Zn(2+). E236 is a catalytic residue. Residues H239 and H245 each contribute to the Zn(2+) site. 2 CUB domains span residues 344–456 (CGET…YEAI) and 457–569 (CGGE…FLKE). 2 N-linked (GlcNAc...) asparagine glycosylation sites follow: N354 and N385. 15 disulfides stabilise this stretch: C397/C419, C457/C483, C510/C532, C573/C585, C581/C594, C596/C609, C613/C639, C666/C688, C729/C740, C736/C749, C751/C764, C769/C795, C822/C844, C882/C912, and C939/C961. Residues 569–610 (EEDECARPDNGGCEQRCVNTLGSYKCSCDPGYELAPDKKSCE) enclose the EGF-like 1; calcium-binding domain. Residues 613 to 725 (CGGLLTKLNG…KGFRAHFFSD (113 aa)) form the CUB 3 domain. N621 is a glycosylation site (N-linked (GlcNAc...) asparagine). The EGF-like 2; calcium-binding domain maps to 725–765 (DKDECSKDNGGCQHECINTIGSYVCQCRNGFVLHDNKHDCK). CUB domains lie at 769–881 (CEHR…HSTE) and 882–998 (CGGR…YRSV).

It depends on Zn(2+) as a cofactor.

The protein resides in the secreted. Its function is as follows. Protease which processes procollagen C-propeptides, such as chordin. Required for the embryonic development. Predominant protease, which in the development, influences dorsal-ventral patterning and skeletogenesis. This is Tolloid-like protein 1 (tll1) from Xenopus laevis (African clawed frog).